Reading from the N-terminus, the 1270-residue chain is DNA-directed RNA polymerase subunit beta (1270 aa).

It belongs to the RNA polymerase beta chain family. The RNAP catalytic core consists of 2 alpha, 1 beta, 1 beta' and 1 omega subunit. When a sigma factor is associated with the core the holoenzyme is formed, which can initiate transcription.

It carries out the reaction RNA(n) + a ribonucleoside 5'-triphosphate = RNA(n+1) + diphosphate. In terms of biological role, DNA-dependent RNA polymerase catalyzes the transcription of DNA into RNA using the four ribonucleoside triphosphates as substrates. The sequence is that of DNA-directed RNA polymerase subunit beta from Phocaeicola vulgatus (strain ATCC 8482 / DSM 1447 / JCM 5826 / CCUG 4940 / NBRC 14291 / NCTC 11154) (Bacteroides vulgatus).